We begin with the raw amino-acid sequence, 152 residues long: MLP-like protein 165 (152 aa).

This sequence belongs to the MLP family.

In Arabidopsis thaliana (Mouse-ear cress), this protein is MLP-like protein 165 (MLP165).